Reading from the N-terminus, the 566-residue chain is Glucose-6-phosphate isomerase (566 aa).

Residue E374 is the Proton donor of the active site. Catalysis depends on residues H405 and K529.

It belongs to the GPI family.

The protein resides in the cytoplasm. The catalysed reaction is alpha-D-glucose 6-phosphate = beta-D-fructose 6-phosphate. The protein operates within carbohydrate biosynthesis; gluconeogenesis. It functions in the pathway carbohydrate degradation; glycolysis; D-glyceraldehyde 3-phosphate and glycerone phosphate from D-glucose: step 2/4. Functionally, catalyzes the reversible isomerization of glucose-6-phosphate to fructose-6-phosphate. This chain is Glucose-6-phosphate isomerase, found in Bifidobacterium longum (strain NCC 2705).